A 343-amino-acid polypeptide reads, in one-letter code: Homeobox-leucine zipper protein HOX16 (343 aa).

The segment at residues 74–133 (LPEKKRRLTPEQVHLLERSFEEENKLEPERKTELARKLGLQPRQVAVWFQNRRARWKTKQ) is a DNA-binding region (homeobox). The segment at 132 to 176 (KQLERDFDRLKASFDALRADHDALLQDNHRLHSQVMSLTEKLQEK) is leucine-zipper. Residues 218–239 (FEEQQEQQVKAEDRLSTGSGGS) form a disordered region.

The protein belongs to the HD-ZIP homeobox family. Class I subfamily. In terms of tissue distribution, expressed in seedlings, stems, leaf sheaths and blades and panicles.

The protein resides in the nucleus. Its function is as follows. Probable transcription factor. The chain is Homeobox-leucine zipper protein HOX16 (HOX16) from Oryza sativa subsp. japonica (Rice).